The sequence spans 719 residues: ATP-dependent RNA helicase SUV3 homolog, mitochondrial (719 aa).

The N-terminal 18 residues, 1–18, are a transit peptide targeting the mitochondrion; that stretch reads MRRASGVLRVLGGLTQRC. Residues 16-42 are disordered; sequence QRCSTSSTPSSSRFPAMNSRRKRNSVR. The region spanning 181–319 is the Helicase ATP-binding domain; the sequence is EARSVTRKIF…PAAIDIVKKL (139 aa). An ATP-binding site is contributed by 194–201; the sequence is GPTNSGKT. Residues 343–499 form the Helicase C-terminal domain; it reads KAIESYSNIE…PTYDQIETFS (157 aa). A disordered region spans residues 662 to 692; sequence SKAAGSSKSSEGKRENPSKSEREKPNKRSSI. Basic and acidic residues predominate over residues 671 to 687; it reads SEGKRENPSKSEREKPN. Positions 693–717 form a coiled coil; that stretch reads LEALLKRADISEDDLEQLREELNKN.

This sequence belongs to the helicase family. Requires Mg(2+) as cofactor. The cofactor is Mn(2+).

It is found in the mitochondrion matrix. The protein localises to the nucleus. The enzyme catalyses ATP + H2O = ADP + phosphate + H(+). Functionally, ATPase and DNA/RNA helicase able to unwind DNA/DNA, DNA/RNA and RNA/RNA duplexes in the 5'-3' direction. In Caenorhabditis elegans, this protein is ATP-dependent RNA helicase SUV3 homolog, mitochondrial.